A 473-amino-acid polypeptide reads, in one-letter code: Photosystem II CP43 reaction center protein (473 aa).

Positions 1 to 14 (MKTLYSLRRFYHVE) are excised as a propeptide. Residue Thr15 is modified to N-acetylthreonine. A Phosphothreonine modification is found at Thr15. 5 consecutive transmembrane segments (helical) span residues 69–93 (LFEVAHFVPEKPMYEQGLILLPHLA), 134–155 (LLGPETLEESFPFFGYVWKDRN), 178–200 (KALYFGGVYDTWAPGGGDVRKIT), 255–275 (KPFAWARRAFVWSGEAYLSYS), and 291–312 (WFNNTAYPSEFYGPTGPEASQA). Glu367 provides a ligand contact to [CaMn4O5] cluster. A helical membrane pass occupies residues 447-471 (RARAAAAGFEKGIDRDFEPVLSMTP).

It belongs to the PsbB/PsbC family. PsbC subfamily. PSII is composed of 1 copy each of membrane proteins PsbA, PsbB, PsbC, PsbD, PsbE, PsbF, PsbH, PsbI, PsbJ, PsbK, PsbL, PsbM, PsbT, PsbX, PsbY, PsbZ, Psb30/Ycf12, at least 3 peripheral proteins of the oxygen-evolving complex and a large number of cofactors. It forms dimeric complexes. It depends on Binds multiple chlorophylls and provides some of the ligands for the Ca-4Mn-5O cluster of the oxygen-evolving complex. It may also provide a ligand for a Cl- that is required for oxygen evolution. PSII binds additional chlorophylls, carotenoids and specific lipids. as a cofactor.

It is found in the plastid. The protein localises to the chloroplast thylakoid membrane. In terms of biological role, one of the components of the core complex of photosystem II (PSII). It binds chlorophyll and helps catalyze the primary light-induced photochemical processes of PSII. PSII is a light-driven water:plastoquinone oxidoreductase, using light energy to abstract electrons from H(2)O, generating O(2) and a proton gradient subsequently used for ATP formation. This chain is Photosystem II CP43 reaction center protein, found in Ipomoea purpurea (Common morning glory).